A 67-amino-acid chain; its full sequence is Prokaryotic ubiquitin-like protein Pup (67 aa).

Residues 1–26 form a disordered region; that stretch reads MATKETGGQKHATRRNQEVEEIEVTT. Residues 23–61 are ARC ATPase binding; it reads EVTTETSVRNEKLAEDVDDILDEIDEVLESNAEDFVRQF. Residues 27–55 adopt a coiled-coil conformation; the sequence is ETSVRNEKLAEDVDDILDEIDEVLESNAE. Glu-67 participates in a covalent cross-link: Isoglutamyl lysine isopeptide (Glu-Lys) (interchain with K-? in acceptor proteins).

It belongs to the prokaryotic ubiquitin-like protein family. As to quaternary structure, strongly interacts with the proteasome-associated ATPase ARC through a hydrophobic interface; the interacting region of Pup lies in its C-terminal half. There is one Pup binding site per ARC hexamer ring.

It participates in protein degradation; proteasomal Pup-dependent pathway. Its function is as follows. Protein modifier that is covalently attached to lysine residues of substrate proteins, thereby targeting them for proteasomal degradation. The tagging system is termed pupylation. This is Prokaryotic ubiquitin-like protein Pup from Thermobifida fusca (strain YX).